The following is a 45-amino-acid chain: Large ribosomal subunit protein bL34 (45 aa).

The interval Met-1–Thr-27 is disordered. Over residues Ser-10–Thr-27 the composition is skewed to basic residues.

This sequence belongs to the bacterial ribosomal protein bL34 family.

The chain is Large ribosomal subunit protein bL34 from Synechococcus sp. (strain CC9902).